Reading from the N-terminus, the 122-residue chain is MIQKETDLMVADNSGAKRVRCIHVLGGTGRRYATIGDMIVVSVKSAIPGGAVKKKDVSKAVVVRTKKEYRRKDGSYIRFDENAVVLLNTQGEPRGTRIFGPVARELRDKQYMKIISLAPEVI.

The protein belongs to the universal ribosomal protein uL14 family. As to quaternary structure, part of the 50S ribosomal subunit. Forms a cluster with proteins L3 and L19. In the 70S ribosome, L14 and L19 interact and together make contacts with the 16S rRNA in bridges B5 and B8.

Its function is as follows. Binds to 23S rRNA. Forms part of two intersubunit bridges in the 70S ribosome. The polypeptide is Large ribosomal subunit protein uL14 (Chloroherpeton thalassium (strain ATCC 35110 / GB-78)).